The chain runs to 26 residues: Thioredoxin H-type (26 aa).

The protein belongs to the thioredoxin family. Plant H-type subfamily.

The protein localises to the cytoplasm. In terms of biological role, participates in various redox reactions through the reversible oxidation of the active center dithiol to a disulfide. The H form is known to activate a number of cytosolic enzymes. This chain is Thioredoxin H-type, found in Populus euphratica (Euphrates poplar).